Consider the following 215-residue polypeptide: Endoplasmic reticulum vesicle protein 25 (215 aa).

The signal sequence occupies residues 1-21 (MQSLITYIALVFSLFVSSAIG). The Lumenal segment spans residues 22–184 (LHLEVPALPN…TNESTNSRVK (163 aa)). The region spanning 34 to 125 (PVCIRDFVQE…VRSVELDIES (92 aa)) is the GOLD domain. A helical transmembrane segment spans residues 185–205 (WFSIVVIASLVGFGVWQIQYL). Residues 206 to 215 (RHYFKVKHII) are Cytoplasmic-facing.

Belongs to the EMP24/GP25L family.

The protein resides in the endoplasmic reticulum membrane. The protein localises to the golgi apparatus membrane. In terms of biological role, constituent of COPII-coated endoplasmic reticulum-derived transport vesicles. Required for efficient transport of a subset of secretory proteins to the Golgi. Facilitates retrograde transport from the Golgi to the endoplasmic reticulum. The polypeptide is Endoplasmic reticulum vesicle protein 25 (ERV25) (Candida albicans (strain SC5314 / ATCC MYA-2876) (Yeast)).